Here is a 264-residue protein sequence, read N- to C-terminus: Small ribosomal subunit protein uS2 (264 aa).

A disordered region spans residues 228–264 (VDTSATVDEEEAEVAEETESMESAEDLDADLIEEEAE). Acidic residues predominate over residues 234-264 (VDEEEAEVAEETESMESAEDLDADLIEEEAE).

The protein belongs to the universal ribosomal protein uS2 family.

The chain is Small ribosomal subunit protein uS2 from Symbiobacterium thermophilum (strain DSM 24528 / JCM 14929 / IAM 14863 / T).